Reading from the N-terminus, the 250-residue chain is Orotidine 5'-phosphate decarboxylase (250 aa).

Substrate contacts are provided by residues Asp-9, Lys-40, 67–76 (DLKFHDIPNT), Thr-132, Arg-190, Gln-204, Gly-224, and Arg-225. The active-site Proton donor is Lys-69.

Belongs to the OMP decarboxylase family. Type 1 subfamily. As to quaternary structure, homodimer.

The enzyme catalyses orotidine 5'-phosphate + H(+) = UMP + CO2. Its pathway is pyrimidine metabolism; UMP biosynthesis via de novo pathway; UMP from orotate: step 2/2. Functionally, catalyzes the decarboxylation of orotidine 5'-monophosphate (OMP) to uridine 5'-monophosphate (UMP). This Nitratidesulfovibrio vulgaris (strain DSM 19637 / Miyazaki F) (Desulfovibrio vulgaris) protein is Orotidine 5'-phosphate decarboxylase.